We begin with the raw amino-acid sequence, 213 residues long: Phosphoribosyl-dephospho-CoA transferase (213 aa).

Residues Asp135 and Asp137 contribute to the active site.

The protein belongs to the MdcG family.

It catalyses the reaction apo-[malonate decarboxylase ACP] + 2'-(5''-triphospho-alpha-D-ribosyl)-3'-dephospho-CoA = holo-[malonate decarboxylase ACP] + diphosphate. Functionally, transfers 2'-(5-triphosphoribosyl)-3'-dephosphocoenzyme-A to the apo-[acyl-carrier-protein] of the malonate decarboxylase to yield holo-[acyl-carrier-protein]. The chain is Phosphoribosyl-dephospho-CoA transferase from Xanthomonas axonopodis pv. citri (strain 306).